The chain runs to 455 residues: Probable glycine dehydrogenase (decarboxylating) subunit 1 (455 aa).

This sequence belongs to the GcvP family. N-terminal subunit subfamily. As to quaternary structure, the glycine cleavage system is composed of four proteins: P, T, L and H. In this organism, the P 'protein' is a heterodimer of two subunits.

It carries out the reaction N(6)-[(R)-lipoyl]-L-lysyl-[glycine-cleavage complex H protein] + glycine + H(+) = N(6)-[(R)-S(8)-aminomethyldihydrolipoyl]-L-lysyl-[glycine-cleavage complex H protein] + CO2. The glycine cleavage system catalyzes the degradation of glycine. The P protein binds the alpha-amino group of glycine through its pyridoxal phosphate cofactor; CO(2) is released and the remaining methylamine moiety is then transferred to the lipoamide cofactor of the H protein. This chain is Probable glycine dehydrogenase (decarboxylating) subunit 1, found in Francisella tularensis subsp. tularensis (strain FSC 198).